A 278-amino-acid polypeptide reads, in one-letter code: ATPase SWSAP1 (278 aa).

A disordered region spans residues 237-278 (SPEKKDSSAGSQSLTLGCDNLPGPGSPLDGILTSETGADSKT). The segment covering 269–278 (TSETGADSKT) has biased composition (polar residues).

In terms of assembly, interacts with ZSWIM7; they form a functional complex involved in homologous recombination repair and stabilize each other. Interacts with RAD51, RAD51B, RAD51C, RAD51D and XRCC3; involved in homologous recombination repair.

Its subcellular location is the nucleus. ATPase which is preferentially stimulated by single-stranded DNA and is involved in homologous recombination repair (HRR). Has a DNA-binding activity which is independent of its ATPase activity. This Mus musculus (Mouse) protein is ATPase SWSAP1 (Swsap1).